The primary structure comprises 195 residues: Adenylate kinase (195 aa).

11-16 is an ATP binding site; that stretch reads GAGKGT. Residues 31-60 form an NMP region; that stretch reads STGDIFRAAVRNQTPLGQQVQAYLDSGRLV. AMP is bound by residues threonine 32, arginine 37, 58–60, 86–89, and glutamine 93; these read RLV and GFPR. The tract at residues 127-137 is LID; the sequence is LRAEKESRKDD. ATP is bound at residue arginine 128. Residues arginine 134 and arginine 145 each coordinate AMP. Glutamine 173 contributes to the ATP binding site.

It belongs to the adenylate kinase family. In terms of assembly, monomer.

It is found in the cytoplasm. The enzyme catalyses AMP + ATP = 2 ADP. Its pathway is purine metabolism; AMP biosynthesis via salvage pathway; AMP from ADP: step 1/1. Catalyzes the reversible transfer of the terminal phosphate group between ATP and AMP. Plays an important role in cellular energy homeostasis and in adenine nucleotide metabolism. The protein is Adenylate kinase of Cyanothece sp. (strain PCC 7425 / ATCC 29141).